The primary structure comprises 499 residues: Lysine--tRNA ligase (499 aa).

Mg(2+) is bound by residues glutamate 408 and glutamate 415.

Belongs to the class-II aminoacyl-tRNA synthetase family. As to quaternary structure, homodimer. It depends on Mg(2+) as a cofactor.

It is found in the cytoplasm. It catalyses the reaction tRNA(Lys) + L-lysine + ATP = L-lysyl-tRNA(Lys) + AMP + diphosphate. The sequence is that of Lysine--tRNA ligase from Bacillus cereus (strain AH820).